The primary structure comprises 403 residues: Acetate kinase (403 aa).

Asn7 contributes to the Mg(2+) binding site. Lys14 is a binding site for ATP. Arg97 contributes to the substrate binding site. Asp154 serves as the catalytic Proton donor/acceptor. Residues 213 to 217, 287 to 289, and 335 to 339 each bind ATP; these read HLGNG, DMR, and GIGEN. Mg(2+) is bound at residue Glu388.

It belongs to the acetokinase family. As to quaternary structure, homodimer. The cofactor is Mg(2+). It depends on Mn(2+) as a cofactor.

Its subcellular location is the cytoplasm. The enzyme catalyses acetate + ATP = acetyl phosphate + ADP. Its pathway is metabolic intermediate biosynthesis; acetyl-CoA biosynthesis; acetyl-CoA from acetate: step 1/2. Its function is as follows. Catalyzes the formation of acetyl phosphate from acetate and ATP. Can also catalyze the reverse reaction. The protein is Acetate kinase of Synechococcus sp. (strain JA-2-3B'a(2-13)) (Cyanobacteria bacterium Yellowstone B-Prime).